We begin with the raw amino-acid sequence, 239 residues long: 4-hydroxy-tetrahydrodipicolinate reductase (239 aa).

NAD(+) contacts are provided by residues G8–M13, G78–T80, and S102–M105. H134 acts as the Proton donor/acceptor in catalysis. H135 lines the (S)-2,3,4,5-tetrahydrodipicolinate pocket. K138 acts as the Proton donor in catalysis. Position 144 to 145 (G144 to T145) interacts with (S)-2,3,4,5-tetrahydrodipicolinate.

This sequence belongs to the DapB family.

It is found in the cytoplasm. It catalyses the reaction (S)-2,3,4,5-tetrahydrodipicolinate + NAD(+) + H2O = (2S,4S)-4-hydroxy-2,3,4,5-tetrahydrodipicolinate + NADH + H(+). It carries out the reaction (S)-2,3,4,5-tetrahydrodipicolinate + NADP(+) + H2O = (2S,4S)-4-hydroxy-2,3,4,5-tetrahydrodipicolinate + NADPH + H(+). It functions in the pathway amino-acid biosynthesis; L-lysine biosynthesis via DAP pathway; (S)-tetrahydrodipicolinate from L-aspartate: step 4/4. Its function is as follows. Catalyzes the conversion of 4-hydroxy-tetrahydrodipicolinate (HTPA) to tetrahydrodipicolinate. This is 4-hydroxy-tetrahydrodipicolinate reductase from Rickettsia africae (strain ESF-5).